The sequence spans 344 residues: Lipase chaperone (344 aa).

The helical transmembrane segment at 13-35 (RIAPYGAAGLAAIVGVAIWSGTG) threads the bilayer.

Belongs to the lipase chaperone family.

The protein resides in the cell inner membrane. In terms of biological role, may be involved in the folding of the extracellular lipase during its passage through the periplasm. In Burkholderia vietnamiensis (strain G4 / LMG 22486) (Burkholderia cepacia (strain R1808)), this protein is Lipase chaperone.